The sequence spans 233 residues: Probable O-methyltransferase Rv1703c (233 aa).

S-adenosyl-L-methionine is bound by residues Val-55, Glu-77, 79-80 (GT), and Glu-102. Residue Asp-157 participates in a divalent metal cation binding. Asp-159 is an S-adenosyl-L-methionine binding site. The a divalent metal cation site is built by Asp-185 and Asn-186.

It belongs to the class I-like SAM-binding methyltransferase superfamily. Cation-dependent O-methyltransferase family.

Its function is as follows. Specifically methylates an O atom of its substrate. This Mycobacterium tuberculosis (strain ATCC 25618 / H37Rv) protein is Probable O-methyltransferase Rv1703c.